A 143-amino-acid polypeptide reads, in one-letter code: MAKKVQAYIKLQVAAGKANPSPPVGPALGQHGVNIMEFCKAFNAETQDIEPGLPTPVVITVYSDRSFTFITKTPPAAVLLKKAAGIKSGSGVPNKTKVGTVTREQLEEIAKTKEPDLTASDLDAAVRTIAGSARSMGLNVEGL.

Belongs to the universal ribosomal protein uL11 family. Part of the ribosomal stalk of the 50S ribosomal subunit. Interacts with L10 and the large rRNA to form the base of the stalk. L10 forms an elongated spine to which L12 dimers bind in a sequential fashion forming a multimeric L10(L12)X complex. Post-translationally, one or more lysine residues are methylated.

In terms of biological role, forms part of the ribosomal stalk which helps the ribosome interact with GTP-bound translation factors. In Chromohalobacter salexigens (strain ATCC BAA-138 / DSM 3043 / CIP 106854 / NCIMB 13768 / 1H11), this protein is Large ribosomal subunit protein uL11.